A 199-amino-acid chain; its full sequence is Recombination protein RecR (199 aa).

The C4-type zinc-finger motif lies at 58 to 73 (CSTCNNLTDKDPCTIC). In terms of domain architecture, Toprim spans 81 to 176 (NLICVVQDAR…RVTRLAYGLP (96 aa)).

Belongs to the RecR family.

Its function is as follows. May play a role in DNA repair. It seems to be involved in an RecBC-independent recombinational process of DNA repair. It may act with RecF and RecO. In Natranaerobius thermophilus (strain ATCC BAA-1301 / DSM 18059 / JW/NM-WN-LF), this protein is Recombination protein RecR.